Consider the following 436-residue polypeptide: GTPase Der (436 aa).

2 consecutive EngA-type G domains span residues 4-167 (PTIA…PNEE) and 175-351 (IKFS…QSQN). GTP contacts are provided by residues 10 to 17 (GRPNVGKS), 57 to 61 (DTGGI), 119 to 122 (NKVD), 181 to 188 (GRPNVGKS), 229 to 233 (DTAGM), and 294 to 297 (NKWD). Residues 352 to 436 (TRIPSAVLND…PIHLIARKRK (85 aa)) form the KH-like domain.

The protein belongs to the TRAFAC class TrmE-Era-EngA-EngB-Septin-like GTPase superfamily. EngA (Der) GTPase family. In terms of assembly, associates with the 50S ribosomal subunit.

In terms of biological role, GTPase that plays an essential role in the late steps of ribosome biogenesis. The polypeptide is GTPase Der (Streptococcus gordonii (strain Challis / ATCC 35105 / BCRC 15272 / CH1 / DL1 / V288)).